The chain runs to 590 residues: Asparagine synthetase [glutamine-hydrolyzing] (590 aa).

The active-site For GATase activity is the Cys2. Residues 2-185 (CGILAVLGCS…PGNLYSSRSG (184 aa)) form the Glutamine amidotransferase type-2 domain. L-glutamine contacts are provided by residues 50 to 54 (RLAII), 75 to 77 (NGE), and Asp98. The Asparagine synthetase domain maps to 193-516 (PQWYNETIPS…PQNSARFTVP (324 aa)). ATP contacts are provided by residues Leu231, Val267, and 341–342 (SG).

The enzyme catalyses L-aspartate + L-glutamine + ATP + H2O = L-asparagine + L-glutamate + AMP + diphosphate + H(+). Its pathway is amino-acid biosynthesis; L-asparagine biosynthesis; L-asparagine from L-aspartate (L-Gln route): step 1/1. This chain is Asparagine synthetase [glutamine-hydrolyzing], found in Asparagus officinalis (Garden asparagus).